The sequence spans 156 residues: Transcription antitermination protein NusB (156 aa).

It belongs to the NusB family.

In terms of biological role, involved in transcription antitermination. Required for transcription of ribosomal RNA (rRNA) genes. Binds specifically to the boxA antiterminator sequence of the ribosomal RNA (rrn) operons. The protein is Transcription antitermination protein NusB of Rickettsia felis (strain ATCC VR-1525 / URRWXCal2) (Rickettsia azadi).